Reading from the N-terminus, the 226-residue chain is UPF0758 protein SPJ_1027 (226 aa).

The 123-residue stretch at 103-225 (SILSSQKLAK…YFSYREKTDL (123 aa)) folds into the MPN domain. Zn(2+)-binding residues include histidine 174, histidine 176, and aspartate 187. A JAMM motif motif is present at residues 174–187 (HNHPSGAVAPSQND).

Belongs to the UPF0758 family.

The polypeptide is UPF0758 protein SPJ_1027 (Streptococcus pneumoniae (strain JJA)).